Here is a 57-residue protein sequence, read N- to C-terminus: uncharacterized protein (57 aa).

Residues 24–44 form a helical membrane-spanning segment; sequence LWVTLLLTMFFTAVEIIGGLI.

It to cation A.eutrophus efflux system protein CzcD.

It is found in the cell membrane. This is an uncharacterized protein from Bacillus caldolyticus.